The following is a 152-amino-acid chain: Small integral membrane protein 28 (152 aa).

A helical transmembrane segment spans residues 52–72; it reads FLCILLPATILLFLAFLLLFL. The tract at residues 117–152 is disordered; the sequence is PLPPEATLPSQCLPPSYEEATRNPPGEEAQGCSPSV.

The protein localises to the membrane. This Homo sapiens (Human) protein is Small integral membrane protein 28.